A 762-amino-acid polypeptide reads, in one-letter code: Cellulose synthase-like protein H2 (762 aa).

The span at 1-15 (MAVVAAAAATGSTTR) shows a compositional bias: low complexity. The disordered stretch occupies residues 1–39 (MAVVAAAAATGSTTRSGGGGGEGTRSGRKKPPPPPLQER). The next 2 membrane-spanning stretches (helical) occupy residues 47-67 (AWAW…LLAL) and 81-101 (GVWR…ALNV). Catalysis depends on residues Asp180 and Asp470. A run of 6 helical transmembrane segments spans residues 541 to 561 (LAYL…CYGL), 582 to 602 (FSVP…EYMA), 619 to 639 (IISV…SLGL), 673 to 693 (LPVF…VTVG), 708 to 728 (APGI…FPFV), and 739 to 759 (GIPW…VTFC).

It belongs to the glycosyltransferase 2 family. Plant cellulose synthase-like H subfamily.

It is found in the golgi apparatus membrane. Its function is as follows. Thought to be a Golgi-localized beta-glycan synthase that polymerize the backbones of noncellulosic polysaccharides (hemicelluloses) of plant cell wall. The chain is Cellulose synthase-like protein H2 (CSLH2) from Oryza sativa subsp. indica (Rice).